The primary structure comprises 168 residues: Transcription antitermination protein NusB (168 aa).

It belongs to the NusB family.

Its function is as follows. Involved in transcription antitermination. Required for transcription of ribosomal RNA (rRNA) genes. Binds specifically to the boxA antiterminator sequence of the ribosomal RNA (rrn) operons. The chain is Transcription antitermination protein NusB from Chlamydia trachomatis serovar L2 (strain ATCC VR-902B / DSM 19102 / 434/Bu).